A 435-amino-acid chain; its full sequence is Serine--tRNA ligase (435 aa).

242–244 (TAE) contacts L-serine. 273-275 (RSE) serves as a coordination point for ATP. Residue E296 participates in L-serine binding. An ATP-binding site is contributed by 360–363 (EISS). S396 contributes to the L-serine binding site.

Belongs to the class-II aminoacyl-tRNA synthetase family. Type-1 seryl-tRNA synthetase subfamily. As to quaternary structure, homodimer. The tRNA molecule binds across the dimer.

The protein resides in the cytoplasm. It catalyses the reaction tRNA(Ser) + L-serine + ATP = L-seryl-tRNA(Ser) + AMP + diphosphate + H(+). The catalysed reaction is tRNA(Sec) + L-serine + ATP = L-seryl-tRNA(Sec) + AMP + diphosphate + H(+). It participates in aminoacyl-tRNA biosynthesis; selenocysteinyl-tRNA(Sec) biosynthesis; L-seryl-tRNA(Sec) from L-serine and tRNA(Sec): step 1/1. Its function is as follows. Catalyzes the attachment of serine to tRNA(Ser). Is also able to aminoacylate tRNA(Sec) with serine, to form the misacylated tRNA L-seryl-tRNA(Sec), which will be further converted into selenocysteinyl-tRNA(Sec). This chain is Serine--tRNA ligase, found in Aliivibrio salmonicida (strain LFI1238) (Vibrio salmonicida (strain LFI1238)).